The primary structure comprises 199 residues: Small ribosomal subunit protein uS4B (199 aa).

The S4 RNA-binding domain occupies 88–151; the sequence is CRLDNLVYRT…RKNKIFIDNF (64 aa).

It belongs to the universal ribosomal protein uS4 family. As to quaternary structure, part of the 30S ribosomal subunit. Contacts protein S5. The interaction surface between S4 and S5 is involved in control of translational fidelity.

In terms of biological role, one of the primary rRNA binding proteins, it binds directly to 16S rRNA where it nucleates assembly of the body of the 30S subunit. With S5 and S12 plays an important role in translational accuracy. The sequence is that of Small ribosomal subunit protein uS4B from Alkaliphilus metalliredigens (strain QYMF).